The following is a 173-amino-acid chain: Crossover junction endodeoxyribonuclease RuvC (173 aa).

Catalysis depends on residues aspartate 8, glutamate 67, and aspartate 139. Positions 8, 67, and 139 each coordinate Mg(2+).

This sequence belongs to the RuvC family. As to quaternary structure, homodimer which binds Holliday junction (HJ) DNA. The HJ becomes 2-fold symmetrical on binding to RuvC with unstacked arms; it has a different conformation from HJ DNA in complex with RuvA. In the full resolvosome a probable DNA-RuvA(4)-RuvB(12)-RuvC(2) complex forms which resolves the HJ. The cofactor is Mg(2+).

The protein resides in the cytoplasm. The catalysed reaction is Endonucleolytic cleavage at a junction such as a reciprocal single-stranded crossover between two homologous DNA duplexes (Holliday junction).. In terms of biological role, the RuvA-RuvB-RuvC complex processes Holliday junction (HJ) DNA during genetic recombination and DNA repair. Endonuclease that resolves HJ intermediates. Cleaves cruciform DNA by making single-stranded nicks across the HJ at symmetrical positions within the homologous arms, yielding a 5'-phosphate and a 3'-hydroxyl group; requires a central core of homology in the junction. The consensus cleavage sequence is 5'-(A/T)TT(C/G)-3'. Cleavage occurs on the 3'-side of the TT dinucleotide at the point of strand exchange. HJ branch migration catalyzed by RuvA-RuvB allows RuvC to scan DNA until it finds its consensus sequence, where it cleaves and resolves the cruciform DNA. The chain is Crossover junction endodeoxyribonuclease RuvC from Serratia proteamaculans (strain 568).